A 500-amino-acid polypeptide reads, in one-letter code: Cytochrome P450 71D13 (500 aa).

A helical; Signal-anchor for type II membrane protein membrane pass occupies residues leucine 3 to isoleucine 23. Cysteine 439 contributes to the heme binding site.

This sequence belongs to the cytochrome P450 family. The cofactor is heme.

It is found in the endoplasmic reticulum membrane. It carries out the reaction (4S)-limonene + reduced [NADPH--hemoprotein reductase] + O2 = (1S,6R)-isopiperitenol + oxidized [NADPH--hemoprotein reductase] + H2O + H(+). Its function is as follows. Hydroxylates (-)-(4S)-limonene to (-)-trans-isopiperitenol, a precursor of (-)-menthol, responsible for the cooling sensation of peppermint. The protein is Cytochrome P450 71D13 (CYP71D13) of Mentha piperita (Peppermint).